Here is a 508-residue protein sequence, read N- to C-terminus: Maturase K (508 aa).

Belongs to the intron maturase 2 family. MatK subfamily.

The protein localises to the plastid. It localises to the chloroplast. Functionally, usually encoded in the trnK tRNA gene intron. Probably assists in splicing its own and other chloroplast group II introns. This chain is Maturase K, found in Ranunculus glacialis (Glacier buttercup).